Consider the following 288-residue polypeptide: Small ribosomal subunit protein uS3 (288 aa).

In terms of domain architecture, KH type-2 spans 38-106; it reads IRRMMSKGLE…QVQLNIIEVK (69 aa). Residues 209–288 are disordered; the sequence is PGRETPAEAP…TQPAETQQEG (80 aa). Residues 219-232 are compositionally biased toward basic and acidic residues; that stretch reads SRPRRERGDRSERP. Low complexity predominate over residues 249-264; the sequence is AGRAAATTIAQAAETP. Residues 277–288 are compositionally biased toward polar residues; it reads AATQPAETQQEG.

The protein belongs to the universal ribosomal protein uS3 family. As to quaternary structure, part of the 30S ribosomal subunit. Forms a tight complex with proteins S10 and S14.

Its function is as follows. Binds the lower part of the 30S subunit head. Binds mRNA in the 70S ribosome, positioning it for translation. This chain is Small ribosomal subunit protein uS3, found in Salinispora arenicola (strain CNS-205).